Consider the following 263-residue polypeptide: Type-2Ba cytolytic delta-endotoxin (263 aa).

The protein belongs to the cyt1/cyt2 endotoxin family. Post-translationally, active after proteolytic processing.

In terms of biological role, kills the larvae of dipteran insects by making pores in the epithelial cell membrane of the insect midgut. The chain is Type-2Ba cytolytic delta-endotoxin (cyt2Ba1) from Bacillus thuringiensis subsp. israelensis.